Consider the following 586-residue polypeptide: Proteasome-associated ATPase (586 aa).

Positions 11–76 (AWRELEAVRA…LREEVDRLGQ (66 aa)) form a coiled coil. 273-278 (GCGKTL) lines the ATP pocket. A docks into pockets in the proteasome alpha-ring region spans residues 585–586 (YL).

Belongs to the AAA ATPase family. Homohexamer. Assembles into a hexameric ring structure that caps the 20S proteasome core. Strongly interacts with the prokaryotic ubiquitin-like protein Pup through a hydrophobic interface; the interacting region of ARC lies in its N-terminal coiled-coil domain. There is one Pup binding site per ARC hexamer ring. Upon ATP-binding, the C-terminus of ARC interacts with the alpha-rings of the proteasome core, possibly by binding to the intersubunit pockets.

It functions in the pathway protein degradation; proteasomal Pup-dependent pathway. Functionally, ATPase which is responsible for recognizing, binding, unfolding and translocation of pupylated proteins into the bacterial 20S proteasome core particle. May be essential for opening the gate of the 20S proteasome via an interaction with its C-terminus, thereby allowing substrate entry and access to the site of proteolysis. Thus, the C-termini of the proteasomal ATPase may function like a 'key in a lock' to induce gate opening and therefore regulate proteolysis. The sequence is that of Proteasome-associated ATPase from Nocardia farcinica (strain IFM 10152).